The sequence spans 5146 residues: SCO-spondin (5146 aa).

An N-terminal signal peptide occupies residues 1 to 17; the sequence is MLLPALLFGAAWALANG. One can recognise an EMI domain in the interval 18–94; sequence RWCEQTETVL…ACCPGWGGTH (77 aa). Asn80, Asn122, and Asn153 each carry an N-linked (GlcNAc...) asparagine glycan. Residues 185-356 form the VWFD 1 domain; it reads ATCATWSGFH…RLPDSELGCL (172 aa). 3 disulfide bridges follow: Cys187–Cys317, Cys209–Cys355, and Cys231–Cys237. N-linked (GlcNAc...) asparagine glycosylation occurs at Asn255. The 56-residue stretch at 464–519 folds into the TIL 1 domain; that stretch reads CPGGQLYSDCASACPPSCSAVGEGSEWSCGEECVSGCECPPGLFWDGALCVPAARC. The 174-residue stretch at 557 to 730 folds into the VWFD 2 domain; the sequence is AECAVGGDGH…FQVAGGGTCS (174 aa). Cystine bridges form between Cys559/Cys692 and Cys583/Cys729. N-linked (GlcNAc...) asparagine glycosylation occurs at Asn814. The 54-residue stretch at 822–875 folds into the TIL 2 domain; the sequence is CPGGQEYQECAPACDRNCGEPEDCGELDNCVAGCNCPLGLLWDPEGQCVPPNLC. An N-linked (GlcNAc...) asparagine glycan is attached at Asn906. The region spanning 1008 to 1178 is the VWFD 3 domain; that stretch reads GRCRASGAPH…HSWRLGPLCP (171 aa). 3 disulfides stabilise this stretch: Cys1010-Cys1142, Cys1032-Cys1177, and Cys1053-Cys1060. The 57-residue stretch at 1271–1327 folds into the TIL 3 domain; it reads CERGQVYEACGPTCPATCHDHRPEPGWPCRAVACVEGCFCPEGTLLHGGVCLEPAAC. N-linked (GlcNAc...) asparagine glycosylation occurs at Asn1349. LDL-receptor class A domains follow at residues 1372 to 1409, 1412 to 1447, 1448 to 1484, 1488 to 1526, 1561 to 1597, and 1599 to 1638; these read GCAEGETPCRESGHCVPHGWLCDNQDDCGDGSDEEGCA, VCGEGQVSCCSGRCLPLVLLCDGQDDCGDGMDEQGC, PCPQDSLTCADGHCLPPARLCDGHPDCPDGADEESCL, DCAPGEVSCVDGTCLGAIQLCDGVWDCLDGGDEGPGHCP, PCGPLDFACGSGECAPRGWRCDGEEDCADGSDESGCD, and PCAPHHAPCARGSHCVAAEQLCDGVPHCPDGSDEDPGACE. 18 disulfides stabilise this stretch: Cys1373–Cys1386, Cys1380–Cys1399, Cys1393–Cys1408, Cys1413–Cys1425, Cys1420–Cys1438, Cys1432–Cys1447, Cys1449–Cys1461, Cys1456–Cys1474, Cys1468–Cys1483, Cys1489–Cys1501, Cys1496–Cys1514, Cys1508–Cys1525, Cys1562–Cys1574, Cys1569–Cys1587, Cys1581–Cys1596, Cys1600–Cys1613, Cys1607–Cys1626, and Cys1620–Cys1637. N-linked (GlcNAc...) asparagine glycosylation occurs at Asn1647. Residues 1652–1690 enclose the LDL-receptor class A 7 domain; the sequence is PCPEYSCPDGLCIGFQQVCDGQPDCELAGTAGPSPEEQG. 2 consecutive TSP type-1 domains span residues 1691–1745 and 1747–1805; these read CGAW…AACP and DGVW…DGCP. Cystine bridges form between Cys1703–Cys1739, Cys1707–Cys1744, and Cys1718–Cys1729. Asn1806 carries N-linked (GlcNAc...) asparagine glycosylation. The 57-residue stretch at 1809 to 1865 folds into the TIL 4 domain; that stretch reads CSGELVFHACVPCPLTCDDISGQATCPPDRPCGGPGCWCPAGQVLGAQGRCVWPRQC. EGF-like domains are found at residues 1821–1860 and 1861–1898; these read CPLTCDDISGQATCPPDRPCGGPGCWCPAGQVLGAQGRCV and WPRQCPCLVDGSRYWPGQRVKTDCQLCVCQDGRPRRCQ. In terms of domain architecture, TSP type-1 3 spans 1906–1962; it reads NCGWSAWSPWAECLGPCGSRSVQWSFRSPNNPRPAGRGHQCRGLHRKARRCQTEPCE. 3 disulfide bridges follow: Cys1907-Cys1946, Cys1918-Cys1922, and Cys1956-Cys1961. The VWFC 1 domain maps to 1962–2022; sequence EGCEQDGRVH…GVGESCCHCV (61 aa). N-linked (GlcNAc...) asparagine glycosylation is found at Asn2027 and Asn2127. Disulfide bonds link Cys2062-Cys2220, Cys2226-Cys2238, Cys2233-Cys2251, and Cys2245-Cys2260. Positions 2062-2220 constitute an F5/8 type C domain; the sequence is CYSPLGLARL…GPLRVELLGC (159 aa). Residues 2225–2261 form the LDL-receptor class A 8 domain; it reads LCLGVGHRCVSGECAPRGAPCDGVEDCKDGSDEEGCV. The interval 2262-2346 is disordered; it reads TPPAGAGRIE…TPTSQPEAQA (85 aa). 2 stretches are compositionally biased toward polar residues: residues 2273 to 2284 and 2331 to 2343; these read TAWSSAPSSAQP and GSVQTVTPTSQPE. 2 LDL-receptor class A domains span residues 2382 to 2418 and 2442 to 2478; these read QCSPGQVPCEVLGCVELEQLCDGREDCLDGSDERPCA and LCSPSQLTCGSGECLPVERRCDLQLDCQDGSDENGCV. 12 cysteine pairs are disulfide-bonded: Cys2383–Cys2395, Cys2390–Cys2408, Cys2402–Cys2417, Cys2443–Cys2455, Cys2450–Cys2468, Cys2462–Cys2477, Cys2480–Cys2516, Cys2491–Cys2495, Cys2526–Cys2531, Cys2546–Cys2583, Cys2550–Cys2588, and Cys2561–Cys2573. 2 consecutive TSP type-1 domains span residues 2479–2532 and 2534–2589; these read DCGL…QACP and AGAW…QPCA. The TIL 5 domain occupies 2611-2654; that stretch reads VPPCPPSCLDPEANRSCSGLCLEGCRCPPGLLLQDAGCLPLSEC. N-linked (GlcNAc...) asparagine glycans are attached at residues Asn2624 and Asn2673. TSP type-1 domains lie at 2694 to 2748, 2751 to 2807, and 2809 to 2862; these read PCGW…SACG, VPGW…PVCL, and LGVW…QPCT. Disulfide bonds link Cys2695–Cys2733, Cys2706–Cys2710, Cys2743–Cys2747, Cys2763–Cys2801, Cys2767–Cys2806, Cys2783–Cys2791, Cys2821–Cys2856, Cys2825–Cys2861, and Cys2836–Cys2846. N-linked (GlcNAc...) asparagine glycosylation is found at Asn2915 and Asn2946. 2 TSP type-1 domains span residues 2964–3019 and 3020–3071; these read ACGW…RPCG and GPAG…GVCP. 3 cysteine pairs are disulfide-bonded: Cys2965–Cys3003, Cys2976–Cys2980, and Cys3013–Cys3018. Asn3041 carries N-linked (GlcNAc...) asparagine glycosylation. The 53-residue stretch at 3070-3122 folds into the TIL 6 domain; it reads CPPGKRWLDCAQGPASCAELSAPRGADQPCHPGCYCPSGMLLLNNACVPTQDC. Asn3143 and Asn3153 each carry an N-linked (GlcNAc...) asparagine glycan. TSP type-1 domains follow at residues 3163-3230 and 3232-3287; these read QPTW…PECD and AGGW…LPCP. Disulfide bonds link Cys3175/Cys3224, Cys3179/Cys3229, Cys3190/Cys3214, Cys3244/Cys3281, Cys3248/Cys3286, and Cys3259/Cys3271. N-linked (GlcNAc...) asparagine glycosylation is present at Asn3290. The region spanning 3295 to 3345 is the TIL 7 domain; sequence EGAEYSACGPPCPRSCDDLVHCVWHCQPGCYCPPGQVLSADGTVHVQPGHC. TSP type-1 domains are found at residues 3388-3450 and 3452-3507; these read PGAW…PECP and DGAW…TQCT. Intrachain disulfides connect Cys3400–Cys3443, Cys3404–Cys3449, Cys3415–Cys3427, Cys3464–Cys3499, Cys3467–Cys3506, and Cys3477–Cys3489. 3 N-linked (GlcNAc...) asparagine glycosylation sites follow: Asn3502, Asn3580, and Asn3607. Positions 3626 to 3674 constitute a TSP type-1 15 domain; it reads LGLWGSWGPWEDCSVSCGGGEQLRFRRCPRPPCPGPARQSRTCRTQVCR. Intrachain disulfides connect Cys3638–Cys3668, Cys3642–Cys3673, and Cys3653–Cys3658. Asn3783 carries an N-linked (GlcNAc...) asparagine glycan. TSP type-1 domains are found at residues 3802–3858, 3872–3924, 3938–3994, and 3996–4051; these read AGGF…PECP, PGGW…PSCT, NCSW…RACP, and PGGW…TPCE. Cystine bridges form between Cys3814–Cys3852, Cys3818–Cys3857, and Cys3830–Cys3842. N-linked (GlcNAc...) asparagine glycans are attached at residues Asn3906 and Asn3938. Cystine bridges form between Cys3939–Cys3975, Cys3950–Cys3954, Cys3988–Cys3993, Cys4008–Cys4045, Cys4012–Cys4050, and Cys4023–Cys4035. Positions 4054-4109 constitute a TIL 8 domain; it reads CPAGMEVVSCANRCPRRCSDLQEGIVCQEDQACQQGCRCPEGSLEQDGGCVPLGHC. Positions 4101-4168 constitute a VWFC 2 domain; it reads GGCVPLGHCE…AWSPCSRSCG (68 aa). A glycan (N-linked (GlcNAc...) asparagine) is linked at Asn4131. TSP type-1 domains lie at 4151 to 4204, 4245 to 4300, 4302 to 4358, and 4360 to 4414; these read HCAW…SPCP, LGAW…WPCP, LPDT…GPCL, and ECVW…GNCS. Cystine bridges form between Cys4152/Cys4188, Cys4163/Cys4167, Cys4198/Cys4203, Cys4257/Cys4294, Cys4261/Cys4299, and Cys4272/Cys4284. Residue Asn4341 is glycosylated (N-linked (GlcNAc...) asparagine). Disulfide bonds link Cys4361/Cys4398, Cys4372/Cys4374, and Cys4408/Cys4413. N-linked (GlcNAc...) asparagine glycosylation occurs at Asn4412. Residues 4418–4473 enclose the TIL 9 domain; it reads CAPPFEFQACGSPCTGLCATYLSPWLCQDLPPCQPGCYCPEGLLEQAGGCVPPEQC. The TSP type-1 24 domain occupies 4610-4661; that stretch reads LCQWGPWGAWSPCQVPCSGGFRLRWREAGIPPGGGCRGPWAQTESCNMGPCP. 3 cysteine pairs are disulfide-bonded: Cys4611/Cys4645, Cys4622/Cys4626, and Cys4655/Cys4660. One can recognise a TIL 10 domain in the interval 4675–4721; that stretch reads DCANQCPRSCVDLWDRVECLQGPCRPGCRCPPGQLVQDGHCVPVSSC. N-linked (GlcNAc...) asparagine glycosylation is found at Asn4729, Asn4746, Asn4751, and Asn4772. The 54-residue stretch at 4761–4814 folds into the TSP type-1 25 domain; that stretch reads CPTLGPWSAWSNCSAPCGGGTTKRHRSCKEGPGVTPCQAQDMEQQQDCNLQPCP. Intrachain disulfides connect Cys4773-Cys4808, Cys4777-Cys4813, and Cys4788-Cys4797. A TIL 11 domain is found at 4816 to 4870; the sequence is CPPGQVLSACAVSCPRLCSHLQPGTPCMQEPCQLGCDCPRGQLLHNGTCVPPAEC. N-linked (GlcNAc...) asparagine glycans are attached at residues Asn4861, Asn4901, Asn4947, and Asn4954. The region spanning 4983 to 5041 is the VWFC 3 domain; that stretch reads CECWHHGRPHPPGSEWQKACESCRCVSGESICTQHCPPLTCAQGETAVQEPGGCCPTCR. Intrachain disulfides connect Cys5052-Cys5100, Cys5066-Cys5117, Cys5076-Cys5133, and Cys5080-Cys5135. The CTCK domain maps to 5052-5139; sequence CRHLTELRNL…IHSCQCSACQ (88 aa). Asn5060 carries an N-linked (GlcNAc...) asparagine glycan.

The protein belongs to the thrombospondin family. In terms of tissue distribution, subcommissural organ. Located at the boundary of the diencephalon and mesencephalon beneath the posterior commissure at the point where the axons cross the midline.

Its subcellular location is the secreted. The protein localises to the extracellular space. Involved in the modulation of neuronal aggregation. May be involved in developmental events during the formation of the central nervous system. The polypeptide is SCO-spondin (SSPO) (Bos taurus (Bovine)).